The chain runs to 397 residues: Lymphoid enhancer-binding factor 1 (397 aa).

Positions 1-60 (MPQLSGGGGGGDPELCATDEMIPFKDEGDPQKEKIFAEISHPEEEGDLADIKSSLVNESE) are CTNNB1-binding. A Glycyl lysine isopeptide (Lys-Gly) (interchain with G-Cter in SUMO) cross-link involves residue Lys-25. A disordered region spans residues 59–102 (SEIIPASNGHEVVRQAPSSQEPYHDKAREHPDEGKHPDGGLYNK). Basic and acidic residues predominate over residues 80–96 (PYHDKAREHPDEGKHPD). Ser-130 carries the post-translational modification Phosphoserine. Residue Thr-153 is modified to Phosphothreonine; by NLK. The residue at position 164 (Ser-164) is a Phosphoserine; by NLK. Disordered stretches follow at residues 164-191 (SPGSHPSHIPSDVNSKQGMSRHPPAPEI) and 266-296 (VKQEHPHTDSDLMHVKPQHEQRKEQEPKRPH). A Glycyl lysine isopeptide (Lys-Gly) (interchain with G-Cter in SUMO) cross-link involves residue Lys-267. A compositionally biased stretch (basic and acidic residues) spans 267–294 (KQEHPHTDSDLMHVKPQHEQRKEQEPKR). The segment at residues 297 to 365 (IKKPLNAFML…LHMQLYPGWS (69 aa)) is a DNA-binding region (HMG box). A disordered region spans residues 367-397 (RDNYGKKKKRKREKLQESTSGTGPRMTAAYI).

It belongs to the TCF/LEF family. As to quaternary structure, binds the armadillo repeat of CTNNB1 and forms a stable complex. Binds TLE1, ALYREF/THOC4, MDFI and MDFIC. Interacts with NLK. Interacts with EP300 and PIASG. Interacts with DAZAP2. In terms of processing, phosphorylated at Thr-153 and/or Ser-164 by NLK. Phosphorylation by NLK at these sites represses LEF1-mediated transcriptional activation of target genes of the canonical Wnt signaling pathway. As to expression, expressed in Vgamma1.1 and Vgamma2 gamma-delta T-cells, however not expressed in gamma-delta thymocytes fated for Il17a expression (at protein level). Expressed in alpha-beta T-cell lineages. Expressed in the thymus. Found in distinct epithelial cell compartments of the skin and is abundant in the hair-producing progenitors of the follicle.

The protein localises to the nucleus. Its function is as follows. Transcription factor that binds DNA in a sequence-specific manner. Participates in the Wnt signaling pathway. Activates transcription of target genes in the presence of CTNNB1 and EP300. PIASG antagonizes both Wnt-dependent and Wnt-independent activation by LEF1. TLE1, TLE2, TLE3 and TLE4 repress transactivation mediated by LEF1 and CTNNB1. Regulates T-cell receptor alpha enhancer function. Required for IL17A expressing gamma-delta T-cell maturation and development, via binding to regulator loci of BLK to modulate expression. Acts as a positive regulator of odontoblast differentiation during mesenchymal tooth germ formation, expression is repressed during the bell stage by MSX1-mediated inhibition of CTNNB1 signaling. May play a role in hair cell differentiation and follicle morphogenesis. The chain is Lymphoid enhancer-binding factor 1 from Mus musculus (Mouse).